Here is a 644-residue protein sequence, read N- to C-terminus: MFQDNPLLAQLKQQLHSQTPRAEGVVKATEKGFGFLEVDAQKSYFIPPPQMKKVMHGDRIVAVIHTEKERESAEPEELIEPFLTRFVGKVQGKNDRLSIVPDHPLLKDAIPCRAARGVQHEFKEGDWAVAEMRRHPLKGDRSFYADLTQYITFADDHFVPWWVTLARHNLEKEAPNGVATEMLDEGLERQDLTALNFVTIDSASTEDMDDALYAEELADGRLQLTVAIADPTAWIAEGSKLDNAAKIRAFTNYLPGFNIPMLPRELSDDLCSLRANEVRPALACRMIISADGTIDDDIAFFAATIESKAKLAYDNVSDWLENNGTWQPDNEGIAQQIRLLHRICLSRSEWRHHHALVFKDRPDYRFVLGEKGEVLDIVAEPRRIANRIVEESMIAANLCAARVLRDKLGFGIYNVHTGFDPANADALAALLKTHGLHVDAEEVLTLEGFCKLRRELDAQPSGFLDSRIRRFQSFAEISTEPGPHFGLGLEAYATWTSPIRKYGDMINHRLLKAVIKGEAIARPQEDITQQMAERRRLNRMAERDVGDWLYARFLNDKAGTNTRFAAEIIDVSRGGMRVRLVDNGAIAFIPAPFLHAVRDELVCSQENGTVQIKGETVYKVTDVIDVTIAEVRMETRSIIARPAA.

The 328-residue stretch at 189–516 (RQDLTALNFV…NHRLLKAVIK (328 aa)) folds into the RNB domain. Residues 561–643 (NTRFAAEIID…ETRSIIARPA (83 aa)) form the S1 motif domain.

This sequence belongs to the RNR ribonuclease family. RNase II subfamily.

Its subcellular location is the cytoplasm. It catalyses the reaction Exonucleolytic cleavage in the 3'- to 5'-direction to yield nucleoside 5'-phosphates.. Involved in mRNA degradation. Hydrolyzes single-stranded polyribonucleotides processively in the 3' to 5' direction. This is Exoribonuclease 2 from Salmonella dublin (strain CT_02021853).